The sequence spans 358 residues: MPNPSSISAPYPLPEEIRNLLADVETFVADILRGENLSKKAKEKRDALVKKIKDVKSIYLQESQDKGDAEDGEEYDDPFAGPPDTISLASERYDKDDEAPSDGNQFPPIAAQDLPFVLKAGYLEKRRKDHSFLGFEWQKRWCALSKTVFYYYGSDKDKQQKGEFAIDGYNVRMNNTLRKDGKKDCCFEISAPDKRIYQFTAASPKDAEEWVQQLNFVLQDMGSDVIPEDDEERGELYDDVDHPLPSSSPTRSLPIDDEIYEELPEEEEDGALVKVEGQRKMSQDSVHHTTGDKSTNYANFYQGLWDCTGALSDELSFKRGDVIYILSKEYNRYGWWVGEMKGAIGLVPKAYVMEMYDI.

S5 and S6 each carry phosphoserine. Residues 62-88 (ESQDKGDAEDGEEYDDPFAGPPDTISL) are disordered. Residue Y75 is modified to Phosphotyrosine. S87 and S90 each carry phosphoserine. The PH domain occupies 116-219 (FVLKAGYLEK…WVQQLNFVLQ (104 aa)). Residues Y151 and Y197 each carry the phosphotyrosine modification. S223 carries the post-translational modification Phosphoserine. The disordered stretch occupies residues 232-254 (ERGELYDDVDHPLPSSSPTRSLP). Over residues 243 to 253 (PLPSSSPTRSL) the composition is skewed to low complexity. Y260 carries the phosphotyrosine modification. A phosphoserine mark is found at S282 and S285. One can recognise an SH3 domain in the interval 296–357 (NYANFYQGLW…PKAYVMEMYD (62 aa)).

It belongs to the SKAP family. As to quaternary structure, interacts with FYB1, which is required for SKAP2 protein stability. Interacts with PTPNS1. Part of a complex consisting of SKAP2, FYB1 and PTPNS1. Part of a complex consisting of SKAP2, FYB1 and LILRB3. Interacts with LAT, GRB2, PTK2B and PRAM1. May interact with actin. May interact with FYN, HCK and LYN. Interacts with FASLG.

The protein localises to the cytoplasm. Functionally, may be involved in B-cell and macrophage adhesion processes. In B-cells, may act by coupling the B-cell receptor (BCR) to integrin activation. May play a role in src signaling pathway. This chain is Src kinase-associated phosphoprotein 2 (SKAP2), found in Bos taurus (Bovine).